A 733-amino-acid polypeptide reads, in one-letter code: DNA repair and recombination protein RAD54-like (733 aa).

Residues 1-35 form a disordered region; it reads LAKRKAGGEEEDGEWRPPATQKRQKAGSEAESADC. The region spanning 159–334 is the Helicase ATP-binding domain; the sequence is SRRIPGSHGC…FSLVHFVNSG (176 aa). Position 172–179 (172–179) interacts with ATP; sequence DEMGLGKT. The DEGH box motif lies at 285 to 288; the sequence is DEGH. In terms of domain architecture, Helicase C-terminal spans 488 to 642; that stretch reads LVLDYILAVT…CVVDEEQDVE (155 aa). Position 504 is an N6-acetyllysine (Lys-504). Ser-561 is modified (phosphoserine; by NEK1).

The protein belongs to the SNF2/RAD54 helicase family. In terms of assembly, homohexamer. Interacts (via N-terminus) with RAD51. Interacts with NAP1L1. Interacts with BRD9; this interaction orchestrates RAD51-RAD54 complex formation. Acetylated. Acetylation promotes interaction with BRD9, and subsequently with RAD54, which is essential for homologous recombination (HR). In terms of processing, phosphorylated. Phosphorylation at Ser-561 by NEK1 specifically in G2 phase allows efficient removal of RAD51 filaments from DNA. Highly expressed in bursa, thymus, testis, and ovary. Low level of expression seen in all other organs tested.

The protein localises to the nucleus. Functionally, plays an essential role in homologous recombination (HR) which is a major pathway for repairing DNA double-strand breaks (DSBs), single-stranded DNA (ssDNA) gaps, and stalled or collapsed replication forks. Acts as a molecular motor during the homology search and guides RAD51 ssDNA along a donor dsDNA thereby changing the homology search from the diffusion-based mechanism to a motor-guided mechanism. Plays also an essential role in RAD51-mediated synaptic complex formation which consists of three strands encased in a protein filament formed once homology is recognized. Once DNA strand exchange occured, dissociates RAD51 from nucleoprotein filaments formed on dsDNA. This is DNA repair and recombination protein RAD54-like (RAD54L) from Gallus gallus (Chicken).